The chain runs to 687 residues: Protein SDA1 homolog (687 aa).

A phosphoserine mark is found at serine 232, serine 234, and serine 236. Residues 254 to 315 (KKGSKNKKKL…SCKERFEVKM (62 aa)) adopt a coiled-coil conformation. The segment at 484–509 (LEKGENTEDDEDGWESASLSEEEEED) is disordered. The span at 490–509 (TEDDEDGWESASLSEEEEED) shows a compositional bias: acidic residues. Threonine 552 carries the phosphothreonine modification. Phosphoserine occurs at positions 585, 589, and 595. The interval 604-651 (KKPKSDKETRLATAMAGRTDRKEFVRKKTKINPFSSSTNKEKKKQKNF) is disordered.

This sequence belongs to the SDA1 family.

Its subcellular location is the nucleus. It is found in the nucleolus. Required for 60S pre-ribosomal subunits export to the cytoplasm. The sequence is that of Protein SDA1 homolog (Sdad1) from Mus musculus (Mouse).